Reading from the N-terminus, the 462-residue chain is Argininosuccinate lyase (462 aa).

Belongs to the lyase 1 family. Argininosuccinate lyase subfamily.

It is found in the cytoplasm. It carries out the reaction 2-(N(omega)-L-arginino)succinate = fumarate + L-arginine. It functions in the pathway amino-acid biosynthesis; L-arginine biosynthesis; L-arginine from L-ornithine and carbamoyl phosphate: step 3/3. The protein is Argininosuccinate lyase of Nitratiruptor sp. (strain SB155-2).